The following is an 88-amino-acid chain: MVPRCQIDVLYFAKSAEIAGVRSETISVPQEIKASELWKELEMLHPGLADVRNQVIFAVRQEYVELGDQQLLLQPGDEVAIIPPISGG.

Glycine 88 is subject to 1-thioglycine; alternate. At glycine 88 the chain carries Glycyl adenylate; alternate.

This sequence belongs to the MoaD family. MOCS2A subfamily. As to quaternary structure, heterotetramer; composed of 2 small (MOCS2A) and 2 large (MOCS2B) subunits. C-terminal thiocarboxylation occurs in 2 steps, it is first acyl-adenylated (-COAMP) via the hesA/moeB/thiF part of MOCS3, then thiocarboxylated (-COSH) via the rhodanese domain of MOCS3.

The protein resides in the cytoplasm. It localises to the cytosol. Its pathway is cofactor biosynthesis; molybdopterin biosynthesis. Its function is as follows. Acts as a sulfur carrier required for molybdopterin biosynthesis. Component of the molybdopterin synthase complex that catalyzes the conversion of precursor Z into molybdopterin by mediating the incorporation of 2 sulfur atoms into precursor Z to generate a dithiolene group. In the complex, serves as sulfur donor by being thiocarboxylated (-COSH) at its C-terminus by MOCS3. After interaction with MOCS2B, the sulfur is then transferred to precursor Z to form molybdopterin. This Mus musculus (Mouse) protein is Molybdopterin synthase sulfur carrier subunit.